The primary structure comprises 289 residues: Myoblast determination protein 1 homolog A (289 aa).

Positions Asp95–Leu146 constitute a bHLH domain. Residues Ser165 to Gly212 form a disordered region. Polar residues-rich tracts occupy residues Ser168–Ser178 and Tyr197–Asp208.

Efficient DNA binding requires dimerization with another bHLH protein.

The protein localises to the nucleus. In terms of biological role, may act as a transcriptional activator that promotes transcription of muscle-specific target genes and plays a role in muscle differentiation. The sequence is that of Myoblast determination protein 1 homolog A (myod1-a) from Xenopus laevis (African clawed frog).